We begin with the raw amino-acid sequence, 264 residues long: GTP cyclohydrolase FolE2 (264 aa).

It belongs to the GTP cyclohydrolase IV family.

It carries out the reaction GTP + H2O = 7,8-dihydroneopterin 3'-triphosphate + formate + H(+). It participates in cofactor biosynthesis; 7,8-dihydroneopterin triphosphate biosynthesis; 7,8-dihydroneopterin triphosphate from GTP: step 1/1. Functionally, converts GTP to 7,8-dihydroneopterin triphosphate. This is GTP cyclohydrolase FolE2 from Vesicomyosocius okutanii subsp. Calyptogena okutanii (strain HA).